We begin with the raw amino-acid sequence, 644 residues long: Exoribonuclease 2 (644 aa).

In terms of domain architecture, RNB spans 189-516 (REDLTALDFV…NHRLLKAVIK (328 aa)). The region spanning 561–643 (DTRFAAEIVD…ETRSIIARPV (83 aa)) is the S1 motif domain.

It belongs to the RNR ribonuclease family. RNase II subfamily.

Its subcellular location is the cytoplasm. The catalysed reaction is Exonucleolytic cleavage in the 3'- to 5'-direction to yield nucleoside 5'-phosphates.. In terms of biological role, involved in mRNA degradation. Hydrolyzes single-stranded polyribonucleotides processively in the 3' to 5' direction. This is Exoribonuclease 2 from Escherichia coli O45:K1 (strain S88 / ExPEC).